The following is a 255-amino-acid chain: Sporulation-specific N-acetylmuramoyl-L-alanine amidase (255 aa).

A MurNAc-LAA domain is found at 4-172 (IFIDPGHGGS…LARGHANGLE (169 aa)). Residues histidine 10, glutamate 24, and histidine 79 each contribute to the Zn(2+) site. Glutamate 141 is an active-site residue. The 75-residue stretch at 180-254 (TSSSGLYKVQ…AGFDAIVILE (75 aa)) folds into the SPOR domain. Tandem repeats lie at residues 184–219 (GLYK…LLKD) and 220–255 (GLYK…ILES). The tract at residues 184–255 (GLYKVQIGAF…GFDAIVILES (72 aa)) is 2 X 35 AA approximate tandem repeats.

Belongs to the N-acetylmuramoyl-L-alanine amidase 3 family. Zn(2+) is required as a cofactor.

It is found in the secreted. The protein localises to the cell wall. It carries out the reaction Hydrolyzes the link between N-acetylmuramoyl residues and L-amino acid residues in certain cell-wall glycopeptides.. Inhibited by EDTA. Functionally, autolysins are involved in some important biological processes such as cell separation, cell-wall turnover, competence for genetic transformation, formation of the flagella - in particular of its basal body - and sporulation. CwlC is able to hydrolyze type A cell walls such as B.subtilis. Its main function is to lyze the mother cell wall peptidoglycan, playing a role during sporulation. This chain is Sporulation-specific N-acetylmuramoyl-L-alanine amidase (cwlC), found in Bacillus subtilis (strain 168).